Here is a 210-residue protein sequence, read N- to C-terminus: Protein Nef (210 aa).

The disordered stretch occupies residues 1 to 37; that stretch reads MGGKWSKRSMGGWSAIRERMRRAEPRAEPAADGVGAV. Residue glycine 2 is the site of N-myristoyl glycine; by host attachment. Residue serine 6 is modified to Phosphoserine; by host. The span at 16–29 shows a compositional bias: basic and acidic residues; that stretch reads IRERMRRAEPRAEP. Residues 66–69 form an acidic; interacts with host PACS1 and PACS2; stabilizes the interaction of NEF/MHC-I with host AP1M1; necessary for MHC-I internalization region; the sequence is EEEE. An SH3-binding; interaction with Src family tyrosine kinases region spans residues 73–82; sequence PVRPQVPLRP. A PxxP; stabilizes the interaction of NEF/MHC-I with host AP1M1; necessary for MHC-I internalization motif is present at residues 76-79; the sequence is PQVP. Positions 112 to 128 are mediates dimerization, Nef-PTE1 interaction; the sequence is EILDLWIYHTQGYFPDW. Residues 152–184 form a binding to ATP6V1H region; it reads VEPEKVEEANEGENNSLLHPMSLHGMEDAEKEV. Residues 168–169 carry the Dileucine internalization motif; necessary for CD4 internalization motif; it reads LL. The short motif at 178 to 179 is the Diacidic; necessary for CD4 internalization element; sequence ED.

Belongs to the lentivirus primate group Nef protein family. Monomer; cytosolic form. Homodimer; membrane bound form. Interacts with Nef associated p21-activated kinase (PAK2); this interaction activates PAK2. Associates with the Nef-MHC-I-AP1 complex; this complex is required for MHC-I internalization. Interacts (via C-terminus) with host PI3-kinase. Interacts with host PACS1; this interaction seems to be weak. Interacts with host PACS2. Interacts with host LCK and MAPK3; these interactions inhibit the kinase activity of the latter. Interacts with host ATP6V1H; this interaction may play a role in CD4 endocytosis. Associates with the CD4-Nef-AP2 complex; this complex is required for CD4 internalization. Interacts with host AP2 subunit alpha and AP2 subunit sigma2. Interacts with TCR-zeta chain; this interaction up-regulates the Fas ligand (FasL) surface expression. Interacts with host HCK, LYN, and SRC; these interactions activate the Src family kinases. Interacts with MAP3K5; this interaction inhibits the Fas and TNFR-mediated death signals. Interacts with beta-COP and PTE1. Interacts with human RACK1; this increases Nef phosphorylation by PKC. Interacts with TP53; this interaction decreases the half-life of TP53, protecting the infected cell against p53-mediated apoptosis. In terms of processing, the virion-associated Nef proteins are cleaved by the viral protease to release the soluble C-terminal core protein. Nef is probably cleaved concomitantly with viral structural proteins on maturation of virus particles. Post-translationally, myristoylated. Phosphorylated on serine residues, probably by host PKCdelta and theta.

Its subcellular location is the host cell membrane. The protein localises to the virion. It is found in the secreted. The protein resides in the host Golgi apparatus membrane. Its function is as follows. Factor of infectivity and pathogenicity, required for optimal virus replication. Alters numerous pathways of T-lymphocyte function and down-regulates immunity surface molecules in order to evade host defense and increase viral infectivity. Alters the functionality of other immunity cells, like dendritic cells, monocytes/macrophages and NK cells. In terms of biological role, in infected CD4(+) T-lymphocytes, down-regulates the surface MHC-I, mature MHC-II, CD4, CD28, CCR5 and CXCR4 molecules. Mediates internalization and degradation of host CD4 through the interaction of with the cytoplasmic tail of CD4, the recruitment of AP-2 (clathrin adapter protein complex 2), internalization through clathrin coated pits, and subsequent transport to endosomes and lysosomes for degradation. Diverts host MHC-I molecules to the trans-Golgi network-associated endosomal compartments by an endocytic pathway to finally target them for degradation. MHC-I down-regulation may involve AP-1 (clathrin adapter protein complex 1) or possibly Src family kinase-ZAP70/Syk-PI3K cascade recruited by PACS2. In consequence infected cells are masked for immune recognition by cytotoxic T-lymphocytes. Decreasing the number of immune receptors also prevents reinfection by more HIV particles (superinfection). Down-regulates host SERINC3 and SERINC5 thereby excluding these proteins from the viral particles. Virion infectivity is drastically higher when SERINC3 or SERINC5 are excluded from the viral envelope, because these host antiviral proteins impair the membrane fusion event necessary for subsequent virion penetration. Bypasses host T-cell signaling by inducing a transcriptional program nearly identical to that of anti-CD3 cell activation. Interaction with TCR-zeta chain up-regulates the Fas ligand (FasL). Increasing surface FasL molecules and decreasing surface MHC-I molecules on infected CD4(+) cells send attacking cytotoxic CD8+ T-lymphocytes into apoptosis. Functionally, plays a role in optimizing the host cell environment for viral replication without causing cell death by apoptosis. Protects the infected cells from apoptosis in order to keep them alive until the next virus generation is ready to strike. Inhibits the Fas and TNFR-mediated death signals by blocking MAP3K5/ASK1. Decreases the half-life of TP53, protecting the infected cell against p53-mediated apoptosis. Inhibits the apoptotic signals regulated by the Bcl-2 family proteins through the formation of a Nef/PI3-kinase/PAK2 complex that leads to activation of PAK2 and induces phosphorylation of host BAD. Its function is as follows. Extracellular Nef protein targets CD4(+) T-lymphocytes for apoptosis by interacting with CXCR4 surface receptors. The chain is Protein Nef from Human immunodeficiency virus type 1 group M subtype B (isolate ARV2/SF2) (HIV-1).